A 169-amino-acid chain; its full sequence is Disulfide bond formation protein B 1 (169 aa).

Over 1 to 14 (MSDNTLYLRREKRF) the chain is Cytoplasmic. A helical membrane pass occupies residues 15–31 (LVLLGIICLALIGGALY). The Periplasmic portion of the chain corresponds to 32–49 (MQVVLDEAPCPLCILQRY). Cysteines 41 and 44 form a disulfide. A helical membrane pass occupies residues 50–65 (ALLFIAIFAFIGAAMP). Topologically, residues 66-72 (GRRSVTA) are cytoplasmic. A helical membrane pass occupies residues 73–89 (FETLVTLSALGGIAAAG). The Periplasmic portion of the chain corresponds to 90–144 (RHVWILAHPSDSCGIDVLQPIVDGLPLATLFPTGFQVSGFCTTPYPPVLGLSLAQ). Cys102 and Cys130 are disulfide-bonded. A helical membrane pass occupies residues 145-163 (WALTAFVLTAVLVPACIIR). Topologically, residues 164-169 (NRRKPY) are cytoplasmic.

This sequence belongs to the DsbB family.

It is found in the cell inner membrane. Functionally, required for disulfide bond formation in some periplasmic proteins. Acts by oxidizing the DsbA protein. The polypeptide is Disulfide bond formation protein B 1 (Pseudomonas syringae pv. syringae (strain B728a)).